The sequence spans 272 residues: MQWNVPRTVSRLARRTCLEPHNAGLFGRCQNVKGPLLLYNAESKAVLVQGSQKQWLHLSAAQCVAKERRPLDAHPPQPGVLRHKQGKQHVSFRRVFSSNATAQGTPEKKEEPDPLQDKSISLYQRFKKTFRQYGKVLIPVHLITSGVWFGTFYYAALKGVNVVPFLELIGLPDSVVSILKNSQSGNALTAYALFKIATPARYTVTLGGTSVTVKYLRSHGYMSTPPPVKEYLQDRMEETKELITEKMEETKDRLTEKLQETKEKVSFKKKVE.

Residues 117 to 229 (DKSISLYQRF…GYMSTPPPVK (113 aa)) enclose the DUF1279 domain. The helical transmembrane segment at 136–156 (VLIPVHLITSGVWFGTFYYAA) threads the bilayer. Positions 229–271 (KEYLQDRMEETKELITEKMEETKDRLTEKLQETKEKVSFKKKV) form a coiled coil. Residues 246-272 (KMEETKDRLTEKLQETKEKVSFKKKVE) are disordered.

Belongs to the FAM210 family. As to quaternary structure, interacts with ATAD3A.

The protein localises to the membrane. The protein resides in the mitochondrion. It localises to the cytoplasm. May play a role in the structure and strength of both muscle and bone. The polypeptide is Protein FAM210A (FAM210A) (Pongo abelii (Sumatran orangutan)).